The sequence spans 716 residues: Calpain-1 catalytic subunit (716 aa).

The Calpain catalytic domain occupies 55–354 (LFRDEAFPPV…FTRLEICNLT (300 aa)). Residues Gln109 and Asp114 each contribute to the Ca(2+) site. Catalysis depends on residues Cys115, His272, and Asn296. Positions 318 and 323 each coordinate Ca(2+). Thr354 is subject to Phosphothreonine. A domain III region spans residues 355-528 (PDALKSQRFR…KSAGTQELDD (174 aa)). The interval 529 to 544 (QVQANLPDEQVLSEEE) is linker. EF-hand domains are found at residues 543–578 (EEID…IISK), 587–620 (FSLE…NRIR), 617–652 (NRIR…AGFK), and 682–716 (VRLE…TMFA). The tract at residues 545 to 715 (IDENFKSLFR…LFKWLQLTMF (171 aa)) is domain IV. Residues Asp600, Asp602, Asn604, Lys606, Glu611, Asp630, Asp632, Ser634, Ser636, and Glu641 each coordinate Ca(2+).

This sequence belongs to the peptidase C2 family. As to quaternary structure, forms a heterodimer with a small (regulatory) subunit CAPNS1. Requires Ca(2+) as cofactor. Undergoes calcium-induced successive autoproteolytic cleavages that generate a membrane-bound 78 kDa active form and an intracellular 75 kDa active form. Calpastatin reduces with high efficiency the transition from 78 kDa to 75 kDa calpain forms.

Its subcellular location is the cytoplasm. The protein localises to the cell membrane. The enzyme catalyses Broad endopeptidase specificity.. Its activity is regulated as follows. Activated by micromolar concentrations of calcium and inhibited by calpastatin. Calcium-regulated non-lysosomal thiol-protease which catalyzes limited proteolysis of substrates involved in cytoskeletal remodeling and signal transduction. Proteolytically cleaves CTBP1. Cleaves and activates caspase-7 (CASP7). The chain is Calpain-1 catalytic subunit from Bos taurus (Bovine).